The primary structure comprises 359 residues: Tropomodulin-1 (359 aa).

A disordered region spans residues 39-61 (PDNALLPAGLRQKDQTTKAPTGP). The tropomyosin-binding stretch occupies residues 39 to 138 (PDNALLPAGL…CDIAAILGMH (100 aa)).

It belongs to the tropomodulin family. In terms of assembly, binds to the N-terminus of tropomyosin and to actin. Interacts with FLII.

It localises to the cytoplasm. The protein resides in the cytoskeleton. Blocks the elongation and depolymerization of the actin filaments at the pointed end. The Tmod/TM complex contributes to the formation of the short actin protofilament, which in turn defines the geometry of the membrane skeleton. May play an important role in regulating the organization of actin filaments by preferentially binding to a specific tropomyosin isoform at its N-terminus. The protein is Tropomodulin-1 (TMOD1) of Bos taurus (Bovine).